The following is a 320-amino-acid chain: Malate dehydrogenase (320 aa).

NAD(+)-binding positions include 10–15 (GAGQIG) and Asp-34. Residues Arg-83 and Arg-89 each contribute to the substrate site. Residues Asn-96 and 119 to 121 (ITN) contribute to the NAD(+) site. Substrate-binding residues include Asn-121 and Arg-152. Residue His-176 is the Proton acceptor of the active site.

The protein belongs to the LDH/MDH superfamily. MDH type 3 family.

The enzyme catalyses (S)-malate + NAD(+) = oxaloacetate + NADH + H(+). Its function is as follows. Catalyzes the reversible oxidation of malate to oxaloacetate. This chain is Malate dehydrogenase, found in Methylorubrum populi (strain ATCC BAA-705 / NCIMB 13946 / BJ001) (Methylobacterium populi).